Reading from the N-terminus, the 860-residue chain is Leucine--tRNA ligase (860 aa).

The 'HIGH' region signature appears at 42–52 (PYPSGRLHMGH). The 'KMSKS' region signature appears at 619–623 (KMSKS). Residue K622 coordinates ATP.

The protein belongs to the class-I aminoacyl-tRNA synthetase family.

Its subcellular location is the cytoplasm. It carries out the reaction tRNA(Leu) + L-leucine + ATP = L-leucyl-tRNA(Leu) + AMP + diphosphate. The polypeptide is Leucine--tRNA ligase (Erwinia tasmaniensis (strain DSM 17950 / CFBP 7177 / CIP 109463 / NCPPB 4357 / Et1/99)).